The chain runs to 45 residues: Cytochrome c6 (45 aa).

3 residues coordinate heme c: Cys-12, Cys-15, and His-16.

The protein belongs to the cytochrome c family. PetJ subfamily. In terms of assembly, monomer. Binds 1 heme c group covalently per subunit.

It is found in the cellular thylakoid lumen. Its function is as follows. Functions as an electron carrier between membrane-bound cytochrome b6-f and photosystem I in oxygenic photosynthesis. The protein is Cytochrome c6 (petJ) of Prochlorothrix hollandica.